The sequence spans 337 residues: tRNA N6-adenosine threonylcarbamoyltransferase (337 aa).

The Fe cation site is built by His-111 and His-115. Residues 134–138, Asp-167, Gly-180, and Asn-272 each bind substrate; that span reads LVSGG. Asp-300 is a Fe cation binding site.

The protein belongs to the KAE1 / TsaD family. Requires Fe(2+) as cofactor.

The protein resides in the cytoplasm. It catalyses the reaction L-threonylcarbamoyladenylate + adenosine(37) in tRNA = N(6)-L-threonylcarbamoyladenosine(37) in tRNA + AMP + H(+). In terms of biological role, required for the formation of a threonylcarbamoyl group on adenosine at position 37 (t(6)A37) in tRNAs that read codons beginning with adenine. Is involved in the transfer of the threonylcarbamoyl moiety of threonylcarbamoyl-AMP (TC-AMP) to the N6 group of A37, together with TsaE and TsaB. TsaD likely plays a direct catalytic role in this reaction. The polypeptide is tRNA N6-adenosine threonylcarbamoyltransferase (Citrobacter koseri (strain ATCC BAA-895 / CDC 4225-83 / SGSC4696)).